The chain runs to 231 residues: 7-cyano-7-deazaguanine synthase (231 aa).

8–18 is a binding site for ATP; that stretch reads FSGGQDSTTCL. Positions 188, 197, 200, and 203 each coordinate Zn(2+).

The protein belongs to the QueC family. Requires Zn(2+) as cofactor.

The catalysed reaction is 7-carboxy-7-deazaguanine + NH4(+) + ATP = 7-cyano-7-deazaguanine + ADP + phosphate + H2O + H(+). It functions in the pathway purine metabolism; 7-cyano-7-deazaguanine biosynthesis. Functionally, catalyzes the ATP-dependent conversion of 7-carboxy-7-deazaguanine (CDG) to 7-cyano-7-deazaguanine (preQ(0)). This chain is 7-cyano-7-deazaguanine synthase, found in Citrobacter koseri (strain ATCC BAA-895 / CDC 4225-83 / SGSC4696).